Consider the following 178-residue polypeptide: ATP synthase subunit delta (178 aa).

It belongs to the ATPase delta chain family. F-type ATPases have 2 components, F(1) - the catalytic core - and F(0) - the membrane proton channel. F(1) has five subunits: alpha(3), beta(3), gamma(1), delta(1), epsilon(1). F(0) has three main subunits: a(1), b(2) and c(10-14). The alpha and beta chains form an alternating ring which encloses part of the gamma chain. F(1) is attached to F(0) by a central stalk formed by the gamma and epsilon chains, while a peripheral stalk is formed by the delta and b chains.

Its subcellular location is the cell inner membrane. In terms of biological role, f(1)F(0) ATP synthase produces ATP from ADP in the presence of a proton or sodium gradient. F-type ATPases consist of two structural domains, F(1) containing the extramembraneous catalytic core and F(0) containing the membrane proton channel, linked together by a central stalk and a peripheral stalk. During catalysis, ATP synthesis in the catalytic domain of F(1) is coupled via a rotary mechanism of the central stalk subunits to proton translocation. This protein is part of the stalk that links CF(0) to CF(1). It either transmits conformational changes from CF(0) to CF(1) or is implicated in proton conduction. This Pseudomonas fluorescens (strain ATCC BAA-477 / NRRL B-23932 / Pf-5) protein is ATP synthase subunit delta.